A 111-amino-acid polypeptide reads, in one-letter code: Nucleoid-associated protein Teth514_0034 (111 aa).

The protein belongs to the YbaB/EbfC family. As to quaternary structure, homodimer.

It is found in the cytoplasm. The protein resides in the nucleoid. Its function is as follows. Binds to DNA and alters its conformation. May be involved in regulation of gene expression, nucleoid organization and DNA protection. The polypeptide is Nucleoid-associated protein Teth514_0034 (Thermoanaerobacter sp. (strain X514)).